The primary structure comprises 335 residues: Aspartate carbamoyltransferase catalytic subunit (335 aa).

Arg54 and Thr55 together coordinate carbamoyl phosphate. Lys82 serves as a coordination point for L-aspartate. Carbamoyl phosphate is bound by residues Arg104, His134, and Gln137. The L-aspartate site is built by Arg177 and Arg232. Positions 277 and 278 each coordinate carbamoyl phosphate.

It belongs to the aspartate/ornithine carbamoyltransferase superfamily. ATCase family. In terms of assembly, heterododecamer (2C3:3R2) of six catalytic PyrB chains organized as two trimers (C3), and six regulatory PyrI chains organized as three dimers (R2).

It catalyses the reaction carbamoyl phosphate + L-aspartate = N-carbamoyl-L-aspartate + phosphate + H(+). It functions in the pathway pyrimidine metabolism; UMP biosynthesis via de novo pathway; (S)-dihydroorotate from bicarbonate: step 2/3. Functionally, catalyzes the condensation of carbamoyl phosphate and aspartate to form carbamoyl aspartate and inorganic phosphate, the committed step in the de novo pyrimidine nucleotide biosynthesis pathway. In Paenarthrobacter aurescens (strain TC1), this protein is Aspartate carbamoyltransferase catalytic subunit.